Here is a 320-residue protein sequence, read N- to C-terminus: Nicotianamine synthase 1 (320 aa).

Belongs to the nicotianamine synthase (NAS)-like family. As to expression, in shoots and roots.

The enzyme catalyses 3 S-adenosyl-L-methionine = nicotianamine + 3 S-methyl-5'-thioadenosine + 3 H(+). Functionally, synthesizes nicotianamine, a polyamine which serves as a sensor for the physiological iron status within the plant, and/or might be involved in the transport of iron. This is Nicotianamine synthase 1 (NAS1) from Arabidopsis thaliana (Mouse-ear cress).